A 1081-amino-acid chain; its full sequence is Protein QUIRKY (1081 aa).

Residues 1–124 (MNTTPFHSDP…SRRGEEGLVY (124 aa)) form the C2 1 domain. Disordered regions lie at residues 154–198 (DTAG…MNIP) and 238–323 (PQHV…MEKK). Positions 163–176 (QQQQQQQQFHPPQQ) are enriched in low complexity. Positions 248–257 (NHPHRNDNHP) are enriched in basic and acidic residues. Residues 258 to 268 (QRPPSPPPPPS) are compositionally biased toward pro residues. 3 consecutive C2 domains span residues 318–440 (TTME…PQWY), 477–605 (SSDA…SKWH), and 652–778 (VCSD…TNSY). Ca(2+) contacts are provided by glutamate 351, serine 352, aspartate 408, and serine 413. 3 helical membrane-spanning segments follow: residues 879-899 (WYRIVGVLAWAVGLAKWLDNI), 916-936 (LVLVWYPDLVVPTAFLYVVMI), and 1024-1044 (LFIAICLVITIVLYAVPAKMV).

This sequence belongs to the MCTP family. Interacts with SUB/SCM and POQ at the plasma membrane. Binds to SUB/SCM at plasmodesmata (PD) in root epidermal cells to promote tissue morphogenesis. It depends on Ca(2+) as a cofactor. Observed mainly in flowers, and, to a lower extent, in seedlings, roots, shoots, leaves, stems and inflorescences. Expressed in the vascular tissues of roots, cotyledons and rosette leaves. Accumulates in roots meristems.

It is found in the cell membrane. It localises to the cytoplasm. Its subcellular location is the golgi apparatus membrane. The protein localises to the cell junction. The protein resides in the plasmodesma. Functionally, may be involved in Ca 2(+)-dependent signaling and membrane trafficking. Plays a role in fruit dehiscence. Components of the machinery involved in organ development mediated by the receptor-like kinase STRUBBELIG (SUB). Collaboratively with SUB and POQ, regulates cell growth anisotropy during gynoecium development, thus linking together cell-cell communication and cellular growth. Together with SUB/SCM, links RLK-dependent signal transduction and intercellular communication mediated by plasmodesmata (PD) to regulate tissue morphogenesis. May function as a signaling molecule by regulating the trafficking of other regulators. In Arabidopsis thaliana (Mouse-ear cress), this protein is Protein QUIRKY.